Reading from the N-terminus, the 375-residue chain is Serine protease 23 (375 aa).

Positions Met-1–Pro-23 are cleaved as a signal peptide. Residue Asn-93 is glycosylated (N-linked (GlcNAc...) asparagine). Cysteines 153 and 169 form a disulfide. The Charge relay system role is filled by His-168. An N-linked (GlcNAc...) asparagine glycan is attached at Asn-199. Active-site charge relay system residues include Asp-232 and Ser-308.

Belongs to the peptidase S1 family.

The protein localises to the secreted. This is Serine protease 23 (PRSS23) from Bos taurus (Bovine).